The sequence spans 85 residues: Large ribosomal subunit protein bL27 (85 aa).

A disordered region spans residues 1 to 21 (MAHKKAAGSTKNGRDSNAKRL).

The protein belongs to the bacterial ribosomal protein bL27 family.

The protein is Large ribosomal subunit protein bL27 of Hydrogenovibrio crunogenus (strain DSM 25203 / XCL-2) (Thiomicrospira crunogena).